Reading from the N-terminus, the 750-residue chain is Polyribonucleotide nucleotidyltransferase (750 aa).

Aspartate 519 and aspartate 525 together coordinate Mg(2+). A KH domain is found at 585–644 (PRVIAVKIPVDKIGEVIGPKGKMINQIQEDTGADISIEDDGTVYIGATNGPSADAARSAI). Residues 656–728 (GERYLGTVVK…DRGKLSLSPV (73 aa)) form the S1 motif domain. Positions 725 to 750 (LSPVVAEEEGAASEDAPAEAAEESAE) are disordered. Over residues 730-750 (AEEEGAASEDAPAEAAEESAE) the composition is skewed to acidic residues.

This sequence belongs to the polyribonucleotide nucleotidyltransferase family. Requires Mg(2+) as cofactor.

It localises to the cytoplasm. It catalyses the reaction RNA(n+1) + phosphate = RNA(n) + a ribonucleoside 5'-diphosphate. Its function is as follows. Involved in mRNA degradation. Catalyzes the phosphorolysis of single-stranded polyribonucleotides processively in the 3'- to 5'-direction. This is Polyribonucleotide nucleotidyltransferase from Paenarthrobacter aurescens (strain TC1).